A 119-amino-acid chain; its full sequence is Inner membrane protein YijD (119 aa).

The Cytoplasmic segment spans residues 1-8 (MKQANQDR). Residues 9-28 (GTLLLALVAGLSINGTFAAL) traverse the membrane as a helical segment. The Periplasmic segment spans residues 29-31 (FSS). The helical transmembrane segment at 32–50 (IVPFSVFPIISLVLTVYCL) threads the bilayer. Over 51 to 61 (HQRYLNRTMPV) the chain is Cytoplasmic. The helical transmembrane segment at 62–84 (GLPGLAAACFILGVLLYSTVVRA) threads the bilayer. At 85-88 (EYPD) the chain is on the periplasmic side. Residues 89 to 108 (IGSNFFPAVLSVIMVFWIGA) form a helical membrane-spanning segment. Over 109 to 119 (KMRNRKQEVAE) the chain is Cytoplasmic.

The protein resides in the cell inner membrane. The polypeptide is Inner membrane protein YijD (yijD) (Escherichia coli O6:H1 (strain CFT073 / ATCC 700928 / UPEC)).